We begin with the raw amino-acid sequence, 395 residues long: Putative pyridoxal phosphate-dependent acyltransferase (395 aa).

110–111 (GF) lines the pyridoxal 5'-phosphate pocket. His135 is a substrate binding site. Residues Ser185, 210–213 (DDAH), and 240–243 (TLSK) contribute to the pyridoxal 5'-phosphate site. Lys243 bears the N6-(pyridoxal phosphate)lysine mark. Thr357 is a binding site for substrate.

It belongs to the class-II pyridoxal-phosphate-dependent aminotransferase family. Homodimer. Requires pyridoxal 5'-phosphate as cofactor.

The polypeptide is Putative pyridoxal phosphate-dependent acyltransferase (Staphylococcus aureus (strain COL)).